The sequence spans 388 residues: Succinate--CoA ligase [ADP-forming] subunit beta (388 aa).

The ATP-grasp domain maps to 9–244 (KEILRKFGVA…PDEEDPKETQ (236 aa)). Residues lysine 46, 53–55 (GRG), glutamate 99, cysteine 102, and glutamate 107 contribute to the ATP site. Residues asparagine 199 and aspartate 213 each contribute to the Mg(2+) site. Residues asparagine 264 and 321–323 (GIM) contribute to the substrate site.

This sequence belongs to the succinate/malate CoA ligase beta subunit family. In terms of assembly, heterotetramer of two alpha and two beta subunits. Mg(2+) serves as cofactor.

It catalyses the reaction succinate + ATP + CoA = succinyl-CoA + ADP + phosphate. The enzyme catalyses GTP + succinate + CoA = succinyl-CoA + GDP + phosphate. The protein operates within carbohydrate metabolism; tricarboxylic acid cycle; succinate from succinyl-CoA (ligase route): step 1/1. Functionally, succinyl-CoA synthetase functions in the citric acid cycle (TCA), coupling the hydrolysis of succinyl-CoA to the synthesis of either ATP or GTP and thus represents the only step of substrate-level phosphorylation in the TCA. The beta subunit provides nucleotide specificity of the enzyme and binds the substrate succinate, while the binding sites for coenzyme A and phosphate are found in the alpha subunit. This Anaeromyxobacter dehalogenans (strain 2CP-C) protein is Succinate--CoA ligase [ADP-forming] subunit beta.